The following is a 58-amino-acid chain: Pepsin-1 (58 aa).

The propeptide at 1 to 41 (LLQVPLEKGQSAREYLQEQGLWEQYRLKYPYNPMAKFDPSF) is activation peptide.

It belongs to the peptidase A1 family.

In Thunnus orientalis (North Pacific bluefin tuna), this protein is Pepsin-1.